The following is a 357-amino-acid chain: UDP-N-acetylglucosamine--N-acetylmuramyl-(pentapeptide) pyrophosphoryl-undecaprenol N-acetylglucosamine transferase (357 aa).

UDP-N-acetyl-alpha-D-glucosamine contacts are provided by residues 7-9 (TGG), Asn-119, Arg-159, Ser-187, Ile-241, and Gln-286.

It belongs to the glycosyltransferase 28 family. MurG subfamily.

It localises to the cell inner membrane. The catalysed reaction is di-trans,octa-cis-undecaprenyl diphospho-N-acetyl-alpha-D-muramoyl-L-alanyl-D-glutamyl-meso-2,6-diaminopimeloyl-D-alanyl-D-alanine + UDP-N-acetyl-alpha-D-glucosamine = di-trans,octa-cis-undecaprenyl diphospho-[N-acetyl-alpha-D-glucosaminyl-(1-&gt;4)]-N-acetyl-alpha-D-muramoyl-L-alanyl-D-glutamyl-meso-2,6-diaminopimeloyl-D-alanyl-D-alanine + UDP + H(+). It functions in the pathway cell wall biogenesis; peptidoglycan biosynthesis. In terms of biological role, cell wall formation. Catalyzes the transfer of a GlcNAc subunit on undecaprenyl-pyrophosphoryl-MurNAc-pentapeptide (lipid intermediate I) to form undecaprenyl-pyrophosphoryl-MurNAc-(pentapeptide)GlcNAc (lipid intermediate II). The sequence is that of UDP-N-acetylglucosamine--N-acetylmuramyl-(pentapeptide) pyrophosphoryl-undecaprenol N-acetylglucosamine transferase from Nitrosomonas europaea (strain ATCC 19718 / CIP 103999 / KCTC 2705 / NBRC 14298).